Consider the following 201-residue polypeptide: FMN-dependent NADH:quinone oxidoreductase (201 aa).

Residues S9 and 93–96 (MYNF) contribute to the FMN site.

This sequence belongs to the azoreductase type 1 family. Homodimer. Requires FMN as cofactor.

It catalyses the reaction 2 a quinone + NADH + H(+) = 2 a 1,4-benzosemiquinone + NAD(+). It carries out the reaction N,N-dimethyl-1,4-phenylenediamine + anthranilate + 2 NAD(+) = 2-(4-dimethylaminophenyl)diazenylbenzoate + 2 NADH + 2 H(+). Quinone reductase that provides resistance to thiol-specific stress caused by electrophilic quinones. Functionally, also exhibits azoreductase activity. Catalyzes the reductive cleavage of the azo bond in aromatic azo compounds to the corresponding amines. This is FMN-dependent NADH:quinone oxidoreductase from Bradyrhizobium sp. (strain BTAi1 / ATCC BAA-1182).